The sequence spans 544 residues: Chaperonin GroEL 2 (544 aa).

ATP-binding positions include 29 to 32, 86 to 90, Gly413, 479 to 481, and Asp495; these read TLGP, DGTTT, and NAA.

It belongs to the chaperonin (HSP60) family. Forms a cylinder of 14 subunits composed of two heptameric rings stacked back-to-back. Interacts with the co-chaperonin GroES.

It localises to the cytoplasm. The enzyme catalyses ATP + H2O + a folded polypeptide = ADP + phosphate + an unfolded polypeptide.. In terms of biological role, together with its co-chaperonin GroES, plays an essential role in assisting protein folding. The GroEL-GroES system forms a nano-cage that allows encapsulation of the non-native substrate proteins and provides a physical environment optimized to promote and accelerate protein folding. The chain is Chaperonin GroEL 2 from Prochlorococcus marinus (strain MIT 9313).